The primary structure comprises 171 residues: 3-hydroxydecanoyl-[acyl-carrier-protein] dehydratase (171 aa).

Histidine 71 is a catalytic residue.

The protein belongs to the thioester dehydratase family. FabA subfamily. Homodimer.

Its subcellular location is the cytoplasm. The catalysed reaction is a (3R)-hydroxyacyl-[ACP] = a (2E)-enoyl-[ACP] + H2O. It catalyses the reaction (3R)-hydroxydecanoyl-[ACP] = (2E)-decenoyl-[ACP] + H2O. The enzyme catalyses (2E)-decenoyl-[ACP] = (3Z)-decenoyl-[ACP]. It functions in the pathway lipid metabolism; fatty acid biosynthesis. In terms of biological role, necessary for the introduction of cis unsaturation into fatty acids. Catalyzes the dehydration of (3R)-3-hydroxydecanoyl-ACP to E-(2)-decenoyl-ACP and then its isomerization to Z-(3)-decenoyl-ACP. Can catalyze the dehydratase reaction for beta-hydroxyacyl-ACPs with saturated chain lengths up to 16:0, being most active on intermediate chain length. The protein is 3-hydroxydecanoyl-[acyl-carrier-protein] dehydratase of Agrobacterium fabrum (strain C58 / ATCC 33970) (Agrobacterium tumefaciens (strain C58)).